The following is a 345-amino-acid chain: Anthranilate phosphoribosyltransferase (345 aa).

Residues glycine 83, 86 to 87 (GD), threonine 91, 93 to 96 (NIST), 111 to 119 (KHGNRNLSS), and serine 123 contribute to the 5-phospho-alpha-D-ribose 1-diphosphate site. Anthranilate is bound at residue glycine 83. Residue serine 95 coordinates Mg(2+). Residue asparagine 114 coordinates anthranilate. Arginine 169 contacts anthranilate. Positions 228 and 229 each coordinate Mg(2+).

It belongs to the anthranilate phosphoribosyltransferase family. As to quaternary structure, homodimer. It depends on Mg(2+) as a cofactor.

The enzyme catalyses N-(5-phospho-beta-D-ribosyl)anthranilate + diphosphate = 5-phospho-alpha-D-ribose 1-diphosphate + anthranilate. It participates in amino-acid biosynthesis; L-tryptophan biosynthesis; L-tryptophan from chorismate: step 2/5. Functionally, catalyzes the transfer of the phosphoribosyl group of 5-phosphorylribose-1-pyrophosphate (PRPP) to anthranilate to yield N-(5'-phosphoribosyl)-anthranilate (PRA). This is Anthranilate phosphoribosyltransferase from Paracoccus denitrificans (strain Pd 1222).